Here is a 275-residue protein sequence, read N- to C-terminus: Ribosomal RNA small subunit methyltransferase A (275 aa).

The S-adenosyl-L-methionine site is built by asparagine 27, leucine 29, glycine 54, glutamate 76, aspartate 102, and asparagine 123.

Belongs to the class I-like SAM-binding methyltransferase superfamily. rRNA adenine N(6)-methyltransferase family. RsmA subfamily.

Its subcellular location is the cytoplasm. The enzyme catalyses adenosine(1518)/adenosine(1519) in 16S rRNA + 4 S-adenosyl-L-methionine = N(6)-dimethyladenosine(1518)/N(6)-dimethyladenosine(1519) in 16S rRNA + 4 S-adenosyl-L-homocysteine + 4 H(+). Specifically dimethylates two adjacent adenosines (A1518 and A1519) in the loop of a conserved hairpin near the 3'-end of 16S rRNA in the 30S particle. May play a critical role in biogenesis of 30S subunits. In Chelativorans sp. (strain BNC1), this protein is Ribosomal RNA small subunit methyltransferase A.